Reading from the N-terminus, the 380-residue chain is Endonuclease III homolog 2 (380 aa).

The Nuclear localization signal signature appears at 8 to 12 (RKRKH). Residues 15–40 (VDIEEVEVRSKYFKKNERTVELVKEN) form an interaction with MLH1 region. A Glycyl lysine isopeptide (Lys-Gly) (interchain with G-Cter in SUMO) cross-link involves residue Lys194. The 25-residue stretch at 228–252 (FDSDIPYDIEGILSLPGVGPKMGYL) folds into the HhH domain. Catalysis depends on Lys248, which acts as the Nucleophile; for N-glycosylase activity. [4Fe-4S] cluster is bound by residues Cys319, Cys326, Cys329, and Cys335. A Nuclear localization signal motif is present at residues 376 to 380 (RHKKK).

The protein belongs to the Nth/MutY family. As to quaternary structure, interacts with MLH1. The cofactor is [4Fe-4S] cluster. Monosumoylated.

The protein localises to the nucleus. It catalyses the reaction 2'-deoxyribonucleotide-(2'-deoxyribose 5'-phosphate)-2'-deoxyribonucleotide-DNA = a 3'-end 2'-deoxyribonucleotide-(2,3-dehydro-2,3-deoxyribose 5'-phosphate)-DNA + a 5'-end 5'-phospho-2'-deoxyribonucleoside-DNA + H(+). Functionally, bifunctional DNA N-glycosylase with associated apurinic/apyrimidinic (AP) lyase function that catalyzes the first step in base excision repair (BER), the primary repair pathway for the repair of oxidative DNA damage. The DNA N-glycosylase activity releases the damaged DNA base from DNA by cleaving the N-glycosidic bond, leaving an AP site. The AP-lyase activity cleaves the phosphodiester bond 3' to the AP site by a beta-elimination. Primarily recognizes and repairs oxidative base damage of pyrimidines, but also purine-derived lesions, alkylation damage as well as abasic sites. Can also repair the oxidation products of 8-oxoguanine. The protein is Endonuclease III homolog 2 (NTG2) of Saccharomyces cerevisiae (strain ATCC 204508 / S288c) (Baker's yeast).